The following is a 158-amino-acid chain: Retinoic acid receptor beta (158 aa).

The segment covering 1–18 has biased composition (low complexity); that stretch reads RHSAQSIETQSTSSEELV. Residues 1 to 24 are disordered; it reads RHSAQSIETQSTSSEELVPSPPSP. A DNA-binding region (nuclear receptor) is located at residues 31-106; the sequence is YKPCFVCQDK…VGMSKESVRN (76 aa). NR C4-type zinc fingers lie at residues 34–54 and 70–94; these read CFVC…CEGC and CHRD…LQRC. The region spanning 129 to 158 is the NR LBD domain; sequence ELDDLTEKIRKAHQETFPSLCQLGKYTTNS.

It belongs to the nuclear hormone receptor family. NR1 subfamily. In terms of assembly, heterodimer; with a RXR molecule. Binds DNA preferentially as a RAR/RXR heterodimer.

The protein resides in the nucleus. In terms of biological role, receptor for retinoic acid. Retinoic acid receptors bind as heterodimers to their target response elements in response to their ligands, all-trans or 9-cis retinoic acid, and regulate gene expression in various biological processes. The RAR/RXR heterodimers bind to the retinoic acid response elements (RARE) composed of tandem 5'-AGGTCA-3' sites known as DR1-DR5. The chain is Retinoic acid receptor beta (RARB) from Notophthalmus viridescens (Eastern newt).